The sequence spans 337 residues: Cytoskeleton protein RodZ (337 aa).

The Cytoplasmic segment spans residues 1–111 (MNTEATHDQN…LGKRRKKRDG (111 aa)). In terms of domain architecture, HTH cro/C1-type spans 19–71 (LRNAREQLGLSQQAVAERLCLKVSTVRDIEEDKAPADLASTFLRGYIRSYARL). Residues 30–49 (QQAVAERLCLKVSTVRDIEE) constitute a DNA-binding region (H-T-H motif). The chain crosses the membrane as a helical; Signal-anchor for type II membrane protein span at residues 112 to 132 (WLMTFTWLVLFVVIGLSGAWW). Over 133-337 (WQDHKAQQEE…TLNAEQSPAQ (205 aa)) the chain is Periplasmic. Over residues 145 to 167 (TMADQSSAELSSNSEQGQSVPLN) the composition is skewed to polar residues. The interval 145–237 (TMADQSSAEL…ATTTPDGAAP (93 aa)) is disordered. The span at 168–207 (TSTTTDPATTSTPPASVDTTATNTQTPAVTAPAPAVDPQQ) shows a compositional bias: low complexity. Residues 208 to 218 (NAVVSPSQANV) show a composition bias toward polar residues. Residues 219 to 237 (DTAATPAPTATTTPDGAAP) are compositionally biased toward low complexity.

This sequence belongs to the RodZ family.

The protein resides in the cell inner membrane. Its function is as follows. Cytoskeletal protein that is involved in cell-shape control through regulation of the length of the long axis. The sequence is that of Cytoskeleton protein RodZ from Escherichia coli (strain 55989 / EAEC).